A 2067-amino-acid polypeptide reads, in one-letter code: Negative regulator of mitosis (2067 aa).

The span at 100–118 (SLAIPQTTSQQSNRPSGSE) shows a compositional bias: polar residues. 3 disordered regions span residues 100–132 (SLAI…STSK), 332–408 (ESIP…DDFA), and 452–480 (GSQS…GFNP). A Nuclear localization signal motif is present at residues 336 to 347 (SHRKKKRRDTGG). Basic residues predominate over residues 336-355 (SHRKKKRRDTGGTRSKRRSS). A compositionally biased stretch (polar residues) spans 384–396 (WNASVMSHSQYST). PC repeat units follow at residues 1434–1465 (AGIM…ADQE), 1482–1520 (AAGF…TKNV), 1532–1562 (GATI…TVRF), and 1625–1659 (GLCF…ISRL). The interval 2020–2042 (FPSESDEEKRDRQETGSMPSSGH) is disordered.

This sequence belongs to the APC1 family.

Functionally, negative regulator of mitosis in E.nidulans. This protein is part of a regulatory pathway that includes the nimA protein kinase. It is required to prevent premature entry into mitosis. Mutations to this protein both cause cells to enter mitosis and prevent them from leaving mitosis. The chain is Negative regulator of mitosis (bimE) from Emericella nidulans (strain FGSC A4 / ATCC 38163 / CBS 112.46 / NRRL 194 / M139) (Aspergillus nidulans).